Consider the following 86-residue polypeptide: Myosuppressin (86 aa).

The signal sequence occupies residues 1–18 (MAIFCNNVLAALPTQCNP). Residues 19-70 (GFLDDLPPRIRKVCVALSRIYELGSEMESYIGDKENHITGFHESIPLLDSGV) constitute a propeptide that is removed on maturation. A Pyrrolidone carboxylic acid modification is found at glutamine 73. The residue at position 82 (phenylalanine 82) is a Phenylalanine amide.

It localises to the secreted. Functionally, myoinhibiting neuropeptide. The sequence is that of Myosuppressin from Apis mellifera (Honeybee).